The sequence spans 127 residues: Large ribosomal subunit protein bL20 (127 aa).

The protein belongs to the bacterial ribosomal protein bL20 family.

In terms of biological role, binds directly to 23S ribosomal RNA and is necessary for the in vitro assembly process of the 50S ribosomal subunit. It is not involved in the protein synthesizing functions of that subunit. The protein is Large ribosomal subunit protein bL20 of Corynebacterium urealyticum (strain ATCC 43042 / DSM 7109).